Here is a 259-residue protein sequence, read N- to C-terminus: MLMVISPAKTLDYETPPVTHRFTQPQYLDHAQELIQQLRQLTPLQISELMKLSDKLAGLNAARYASWHPEFTPENAKQALLAFKGDVYTGLNAEDFGEDDFAFAQDHLRMLSGLYGVLRPLDLMQPYRLEMGTRLANARGKDLYAFWGERISQWLNEALAAQGDDVLLNLASNEYFGAVKRKALQARVIDTEFKDLKNGQYKIISFYAKKARGMMARYVIRERLRDPAGLKDFNAHGYYFSAEQSGPDQLVFLRDAPQD.

The protein belongs to the UPF0246 family.

This chain is UPF0246 protein PLES_14941, found in Pseudomonas aeruginosa (strain LESB58).